We begin with the raw amino-acid sequence, 147 residues long: RxLR effector protein Avr3a (147 aa).

Residues 1–21 form the signal peptide; that stretch reads MRLAIMLSATAVAINFATSSA. Residues 44–59 carry the RxLR-dEER motif; that stretch reads RLLRKNEENEETSEER. Position 48 is an N6-acetyllysine (Lys-48). The interval 77-147 is effector domain; that stretch reads ALTERADAKK…YMMHLGLTGY (71 aa).

The protein belongs to the RxLR effector family. As to quaternary structure, forms homodimers via the RxLR-dEER motif. Interacts with host E3 ligase CMPG1. Interacts with host DRP2. Proteolytically cleaved. The cleavage site directly after the RxLR sequence and the high conservation among other effector proteins suggest that the RxLR motif might play a crucial role in the intracellular processing before secretion. Post-translationally, glycosylated. In terms of processing, N-acetylated at Lys-48 after cleavage.

It localises to the secreted. Its subcellular location is the host cytoplasm. Functionally, multifunctional effector that can suppress host BAK1/SERK3-mediated immunity through at least two different pathways. Manipulates plant immunity by targeting and stabilizing host E3 ligase CMPG1. Preventing the normal 26S proteasome-dependent degradation of potato CMPG1, and thus potentially of its protein substrates in the host cell, further abolishes host cell death during the biotrophic phase of infection. Also associates with and affects the function of the dynamin-related protein 2 (DRP2), a plant GTPase involved in immune receptor-mediated endocytosis. The Avr3a(EM) form evades recognition by R3a, thus does not trigger R3a-mediated hypersensitivity and does not suppress INF1-induced cell death. This Phytophthora infestans (Potato late blight agent) protein is RxLR effector protein Avr3a.